The sequence spans 348 residues: Phosphoribosylformylglycinamidine cyclo-ligase (348 aa).

It belongs to the AIR synthase family.

It localises to the cytoplasm. It catalyses the reaction 2-formamido-N(1)-(5-O-phospho-beta-D-ribosyl)acetamidine + ATP = 5-amino-1-(5-phospho-beta-D-ribosyl)imidazole + ADP + phosphate + H(+). It participates in purine metabolism; IMP biosynthesis via de novo pathway; 5-amino-1-(5-phospho-D-ribosyl)imidazole from N(2)-formyl-N(1)-(5-phospho-D-ribosyl)glycinamide: step 2/2. This chain is Phosphoribosylformylglycinamidine cyclo-ligase, found in Geotalea daltonii (strain DSM 22248 / JCM 15807 / FRC-32) (Geobacter daltonii).